A 499-amino-acid chain; its full sequence is Glycerol kinase (499 aa).

Thr15 serves as a coordination point for ADP. 3 residues coordinate ATP: Thr15, Thr16, and Ser17. Position 15 (Thr15) interacts with sn-glycerol 3-phosphate. Arg19 serves as a coordination point for ADP. Sn-glycerol 3-phosphate is bound by residues Arg85, Glu86, Tyr137, and Asp246. Arg85, Glu86, Tyr137, Asp246, and Gln247 together coordinate glycerol. Residues Thr268 and Gly311 each contribute to the ADP site. Thr268, Gly311, Gln315, and Gly412 together coordinate ATP. Residues Gly412 and Asn416 each coordinate ADP.

This sequence belongs to the FGGY kinase family.

The enzyme catalyses glycerol + ATP = sn-glycerol 3-phosphate + ADP + H(+). It functions in the pathway polyol metabolism; glycerol degradation via glycerol kinase pathway; sn-glycerol 3-phosphate from glycerol: step 1/1. Its activity is regulated as follows. Inhibited by fructose 1,6-bisphosphate (FBP). Its function is as follows. Key enzyme in the regulation of glycerol uptake and metabolism. Catalyzes the phosphorylation of glycerol to yield sn-glycerol 3-phosphate. This is Glycerol kinase from Parabacteroides distasonis (strain ATCC 8503 / DSM 20701 / CIP 104284 / JCM 5825 / NCTC 11152).